We begin with the raw amino-acid sequence, 597 residues long: Elongation factor 4 (597 aa).

Positions 2–184 (NNIRNFSIIA…SLITKVPPPK (183 aa)) constitute a tr-type G domain. GTP is bound by residues 14–19 (DHGKST) and 131–134 (NKID).

Belongs to the TRAFAC class translation factor GTPase superfamily. Classic translation factor GTPase family. LepA subfamily.

It is found in the cell inner membrane. It catalyses the reaction GTP + H2O = GDP + phosphate + H(+). Required for accurate and efficient protein synthesis under certain stress conditions. May act as a fidelity factor of the translation reaction, by catalyzing a one-codon backward translocation of tRNAs on improperly translocated ribosomes. Back-translocation proceeds from a post-translocation (POST) complex to a pre-translocation (PRE) complex, thus giving elongation factor G a second chance to translocate the tRNAs correctly. Binds to ribosomes in a GTP-dependent manner. The protein is Elongation factor 4 of Janthinobacterium sp. (strain Marseille) (Minibacterium massiliensis).